The following is a 249-amino-acid chain: Large ribosomal subunit protein uL4 (249 aa).

The protein belongs to the universal ribosomal protein uL4 family. Part of the 50S ribosomal subunit.

One of the primary rRNA binding proteins, this protein initially binds near the 5'-end of the 23S rRNA. It is important during the early stages of 50S assembly. It makes multiple contacts with different domains of the 23S rRNA in the assembled 50S subunit and ribosome. Its function is as follows. Forms part of the polypeptide exit tunnel. The polypeptide is Large ribosomal subunit protein uL4 (Methanoculleus marisnigri (strain ATCC 35101 / DSM 1498 / JR1)).